The following is a 351-amino-acid chain: E3 ubiquitin-protein ligase TRIM63 (351 aa).

The segment at 23–79 adopts an RING-type zinc-finger fold; the sequence is CPICLEMFTKPVVILPCQHNLCRKCANDIFQAANPYWTNRGGSVSMSGGRFRCPSCR. The segment at 74-218 is interaction with TTN; the sequence is RCPSCRHEVI…LSHKFDALYA (145 aa). The B box-type zinc-finger motif lies at 117-159; sequence GSHPMCKEHEDEKINIYCLTCEVPTCSLCKVFGAHQACEVAPL. The Zn(2+) site is built by Cys-122, His-125, Cys-145, and His-151. Positions 189 to 269 form a coiled coil; it reads SQLEDSCRVT…VETAIQSLDE (81 aa). The 59-residue stretch at 267-325 folds into the COS domain; the sequence is LDEPGGATFLLSAKPLIKSIVEASKGCQLGKTEQGFENMDYFTLNLEHIAEALRAIDFG. A compositionally biased stretch (acidic residues) spans 326–345; sequence TDEEEEFTEEEEEEDQEEGV. The tract at residues 326–351 is disordered; that stretch reads TDEEEEFTEEEEEEDQEEGVSTEGHQ.

In terms of assembly, homodimer. Homooligomer and heterooligomer. Interacts with SUMO2, titin/TTN and GMEB1. Interacts with TRIM54 and probably with TRIM55 and TNNI3. Forms a ternary complex with RACK1 and PRKCE. Interacts with CKM. Muscle specific. Selectively expressed in heart and skeletal muscle.

It localises to the cytoplasm. It is found in the nucleus. The protein resides in the myofibril. Its subcellular location is the sarcomere. The protein localises to the m line. It localises to the z line. The catalysed reaction is S-ubiquitinyl-[E2 ubiquitin-conjugating enzyme]-L-cysteine + [acceptor protein]-L-lysine = [E2 ubiquitin-conjugating enzyme]-L-cysteine + N(6)-ubiquitinyl-[acceptor protein]-L-lysine.. It functions in the pathway protein modification; protein ubiquitination. Functionally, E3 ubiquitin ligase. Mediates the ubiquitination and subsequent proteasomal degradation of CKM, GMEB1 and HIBADH. Regulates the proteasomal degradation of muscle proteins under amino acid starvation, where muscle protein is catabolized to provide other organs with amino acids. Inhibits de novo skeletal muscle protein synthesis under amino acid starvation. Regulates proteasomal degradation of cardiac troponin I/TNNI3 and probably of other sarcomeric-associated proteins. May play a role in striated muscle atrophy and hypertrophy by regulating an anti-hypertrophic PKC-mediated signaling pathway. May regulate the organization of myofibrils through TTN in muscle cells. The protein is E3 ubiquitin-protein ligase TRIM63 (Trim63) of Rattus norvegicus (Rat).